The sequence spans 209 residues: Uracil phosphoribosyltransferase (209 aa).

Residues arginine 79, arginine 104, and 131 to 139 each bind 5-phospho-alpha-D-ribose 1-diphosphate; that span reads DPMLATGGS. Uracil-binding positions include isoleucine 194 and 199-201; that span reads GDA. Aspartate 200 lines the 5-phospho-alpha-D-ribose 1-diphosphate pocket.

This sequence belongs to the UPRTase family. Mg(2+) serves as cofactor.

It catalyses the reaction UMP + diphosphate = 5-phospho-alpha-D-ribose 1-diphosphate + uracil. Its pathway is pyrimidine metabolism; UMP biosynthesis via salvage pathway; UMP from uracil: step 1/1. With respect to regulation, allosterically activated by GTP. Catalyzes the conversion of uracil and 5-phospho-alpha-D-ribose 1-diphosphate (PRPP) to UMP and diphosphate. The protein is Uracil phosphoribosyltransferase of Clostridium kluyveri (strain NBRC 12016).